The chain runs to 408 residues: Menaquinone reductase (408 aa).

FAD contacts are provided by residues 13-17, 46-49, Arg-103, Ala-127, Asp-290, and 302-303; these read GAGPA, CGDG, and GI.

This sequence belongs to the geranylgeranyl reductase family. It depends on FAD as a cofactor.

The enzyme catalyses menaquinone-9 + AH2 = beta-dihydromenaquinone-9 + A. It participates in quinol/quinone metabolism; menaquinone biosynthesis. Catalyzes the reduction of a single double bond in the isoprenoid tail of menaquinone (MK-9) in M.tuberculosis, likely the beta-isoprene unit, forming the predominant form of menaquinone found in mycobacteria, MK-9(II-H2). This chain is Menaquinone reductase, found in Mycobacterium tuberculosis (strain CDC 1551 / Oshkosh).